The primary structure comprises 99 residues: U1-theraphotoxin-Lsp1c (99 aa).

A signal peptide spans 1 to 23 (MRKITIRALLLCSLLLVFHTSAA). A propeptide spanning residues 24–50 (AELQAQEGHLMIPGDTDTALETVDDER) is cleaved from the precursor. Intrachain disulfides connect cysteine 54/cysteine 67, cysteine 58/cysteine 91, cysteine 72/cysteine 74, and cysteine 85/cysteine 96.

This sequence belongs to the neurotoxin 12 (Hwtx-2) family. 04 (lasiotoxin) subfamily. Expressed by the venom gland.

It localises to the secreted. In terms of biological role, toxin that causes irreversible contractile paralysis into adult Aedes aegypti resulting in 100% mortality after 24 hours. The chain is U1-theraphotoxin-Lsp1c from Lasiodora sp. (strain IBSP 8539) (Brazilian salmon pink birdeater).